A 55-amino-acid chain; its full sequence is Lantibiotic nisin-U (55 aa).

The propeptide occupies 1 to 24 (MNNEDFNLDLIKISKENNSGASPR). The residue at position 26 (Thr26) is a 2,3-didehydrobutyrine. The lanthionine (Ser-Cys) cross-link spans 27–31 (SKSLC). Ser29 carries the post-translational modification 2,3-didehydroalanine (Ser). 4 cross-links (beta-methyllanthionine (Thr-Cys)) span residues 32 to 35 (TPGC), 37 to 43 (TGILMTC), 47 to 50 (TATC), and 49 to 52 (TCGC). Thr42 carries the 2,3-didehydrobutyrine modification.

Maturation of lantibiotics involves the enzymatic conversion of Thr, and Ser into dehydrated AA and the formation of thioether bonds with cysteine. This is followed by membrane translocation and cleavage of the modified precursor.

The protein localises to the secreted. Functionally, lanthionine-containing peptide antibiotic (lantibiotic) active on Gram-positive bacteria. The bactericidal activity of lantibiotics is based on depolarization of energized bacterial cytoplasmic membranes, initiated by the formation of aqueous transmembrane pores. The chain is Lantibiotic nisin-U (nsuA) from Streptococcus uberis.